The following is a 306-amino-acid chain: Non-specific ribonucleoside hydrolase RihC (306 aa).

The active site involves H235.

This sequence belongs to the IUNH family. RihC subfamily.

Functionally, hydrolyzes both purine and pyrimidine ribonucleosides with a broad-substrate specificity. This chain is Non-specific ribonucleoside hydrolase RihC, found in Salmonella enteritidis PT4 (strain P125109).